Consider the following 983-residue polypeptide: Serine/threonine-protein kinase N2 (983 aa).

Residues 33–109 (KLDFSDTMVQ…LQELNAHIVV (77 aa)) form the REM-1 1 domain. K77 is modified (N6-acetyllysine). Residues 107–135 (IVVSDPEDSTDCPRTPDTPNSDSRSSTSN) form a disordered region. S110 is modified (phosphoserine). Phosphothreonine is present on residues T121 and T124. Positions 121-135 (TPDTPNSDSRSSTSN) are enriched in low complexity. 2 consecutive REM-1 domains span residues 121–203 (TPDT…TNEL) and 204–284 (AFDN…ELPR). S301, S305, S359, and S361 each carry phosphoserine. A disordered region spans residues 351–382 (TSVALPGWSPSDNRSSFMSRTSKSKSGSSRNL). The region spanning 352-472 (SVALPGWSPS…LYLEPQGTLF (121 aa)) is the C2 domain. The segment covering 364 to 380 (RSSFMSRTSKSKSGSSR) has biased composition (low complexity). The segment at 381–462 (NLLKTDDLSN…FLDNQRHGMC (82 aa)) is necessary to rescue apical junction formation. Phosphoserine occurs at positions 534, 582, 619, and 630. Positions 553-588 (LAPPASDSTVTKLDFDLEPEPPPAPPRASSLGETDE) are disordered. The 260-residue stretch at 656–915 (FRCCAVLGRG…AEDVKKHPFF (260 aa)) folds into the Protein kinase domain. ATP contacts are provided by residues 662-670 (LGRGHFGKV) and K685. D781 (proton acceptor) is an active-site residue. T815 carries the phosphothreonine; by PDPK1 modification. The interval 916-976 (RLTDWSALMD…EEEQEMFHDF (61 aa)) is necessary for the catalytic activity. The 68-residue stretch at 916–983 (RLTDWSALMD…HDFDYVADWC (68 aa)) folds into the AGC-kinase C-terminal domain. A Phosphoserine modification is found at S951. Residue T957 is modified to Phosphothreonine. The negatively regulates the responsiveness of the catalytic activity by cardiolipin and is required for optimal activation by the GTP-bound RhoA stretch occupies residues 977–983 (DYVADWC).

Belongs to the protein kinase superfamily. AGC Ser/Thr protein kinase family. PKC subfamily. Interacts (via the REM repeats) with RHOA (GTP-bound form preferentially) and interacts (via the REM repeats) with RAC1 (GTP-bound form preferentially); the interactions induce its autophosphorylation. Interacts with NCK1 (via SH3 domains). Interacts with RHOC. Interacts with NCK1 and NCK2. Interacts with CD44. Interacts (via C-terminal kinase domain) with PDPK1; the interaction stimulates PDPK1 kinase activity. Interacts with MAP3K2; the interaction activates PRK2 kinase activity in a MAP3K2-independent kinase activity. Interacts (via C-terminal domain) with AKT1; the interaction occurs with the C-terminal cleavage product of PRK2 in apoptotic cells. Interacts (via C-terminus) with PTPN13 (via PDZ 3 domain). Interacts with CDK10. Post-translationally, phosphorylated during mitosis. Autophosphorylated. Phosphorylated. Phosphorylated by CDK10. In terms of processing, activated by limited proteolysis with trypsin. Proteolytically cleaved by caspase-3 during the induction of apoptotic cell death. As to expression, ubiquitous. Highly expressed in liver and lung Expressed in astrocytes (at protein level). Ubiquitous.

It localises to the cytoplasm. The protein localises to the nucleus. Its subcellular location is the membrane. The protein resides in the cell projection. It is found in the lamellipodium. It localises to the cytoskeleton. The protein localises to the cleavage furrow. Its subcellular location is the midbody. The protein resides in the cell junction. It catalyses the reaction L-seryl-[protein] + ATP = O-phospho-L-seryl-[protein] + ADP + H(+). The enzyme catalyses L-threonyl-[protein] + ATP = O-phospho-L-threonyl-[protein] + ADP + H(+). Kinase activity is activated upon binding to GTP-bound Rho1/Rac1 GTPases. Activated by caspase-3 (CASP3) cleavage during apoptosis. Activated by lipids, particularly cardiolipin and to a lesser extent by other acidic phospholipids and unsaturated fatty acids. Two specific sites, Thr-815 (activation loop of the kinase domain) and Thr-957 (turn motif), need to be phosphorylated for its full activation. Functionally, PKC-related serine/threonine-protein kinase and Rho/Rac effector protein that participates in specific signal transduction responses in the cell. Plays a role in the regulation of cell cycle progression, actin cytoskeleton assembly, cell migration, cell adhesion, tumor cell invasion and transcription activation signaling processes. Phosphorylates CTTN in hyaluronan-induced astrocytes and hence decreases CTTN ability to associate with filamentous actin. Phosphorylates HDAC5, therefore lead to impair HDAC5 import. Direct RhoA target required for the regulation of the maturation of primordial junctions into apical junction formation in bronchial epithelial cells. Required for G2/M phases of the cell cycle progression and abscission during cytokinesis in a ECT2-dependent manner. Stimulates FYN kinase activity that is required for establishment of skin cell-cell adhesion during keratinocytes differentiation. Regulates epithelial bladder cells speed and direction of movement during cell migration and tumor cell invasion. Inhibits Akt pro-survival-induced kinase activity. Mediates Rho protein-induced transcriptional activation via the c-fos serum response factor (SRF). Involved in the negative regulation of ciliogenesis. This Mus musculus (Mouse) protein is Serine/threonine-protein kinase N2 (Pkn2).